We begin with the raw amino-acid sequence, 258 residues long: Imidazole glycerol phosphate synthase subunit HisF (258 aa).

Active-site residues include Asp11 and Asp130.

The protein belongs to the HisA/HisF family. Heterodimer of HisH and HisF.

The protein localises to the cytoplasm. It carries out the reaction 5-[(5-phospho-1-deoxy-D-ribulos-1-ylimino)methylamino]-1-(5-phospho-beta-D-ribosyl)imidazole-4-carboxamide + L-glutamine = D-erythro-1-(imidazol-4-yl)glycerol 3-phosphate + 5-amino-1-(5-phospho-beta-D-ribosyl)imidazole-4-carboxamide + L-glutamate + H(+). It functions in the pathway amino-acid biosynthesis; L-histidine biosynthesis; L-histidine from 5-phospho-alpha-D-ribose 1-diphosphate: step 5/9. Its function is as follows. IGPS catalyzes the conversion of PRFAR and glutamine to IGP, AICAR and glutamate. The HisF subunit catalyzes the cyclization activity that produces IGP and AICAR from PRFAR using the ammonia provided by the HisH subunit. The sequence is that of Imidazole glycerol phosphate synthase subunit HisF from Klebsiella pneumoniae (strain 342).